We begin with the raw amino-acid sequence, 181 residues long: Lipoprotein signal peptidase (181 aa).

A run of 3 helical transmembrane segments spans residues 25 to 45, 86 to 106, and 107 to 127; these read LFYKLTMIGFVGFIILLQVFI, LVYFLQGLLSVIALVFLVFMV, and KYSYIFWITTLAFGSLGNFFD. Active-site residues include aspartate 138 and aspartate 153. A helical membrane pass occupies residues 149–169; it reads FNFADCCITFGFIGLFFCFLI.

This sequence belongs to the peptidase A8 family.

Its subcellular location is the cell membrane. The catalysed reaction is Release of signal peptides from bacterial membrane prolipoproteins. Hydrolyzes -Xaa-Yaa-Zaa-|-(S,diacylglyceryl)Cys-, in which Xaa is hydrophobic (preferably Leu), and Yaa (Ala or Ser) and Zaa (Gly or Ala) have small, neutral side chains.. Its pathway is protein modification; lipoprotein biosynthesis (signal peptide cleavage). Its function is as follows. This protein specifically catalyzes the removal of signal peptides from prolipoproteins. In Mycoplasma genitalium (strain ATCC 33530 / DSM 19775 / NCTC 10195 / G37) (Mycoplasmoides genitalium), this protein is Lipoprotein signal peptidase.